The primary structure comprises 763 residues: Probable ubiquitin carboxyl-terminal hydrolase MINDY-4 (763 aa).

Residue Ser143 is modified to Phosphoserine. The tract at residues 154 to 368 is disordered; the sequence is SSKRSSHKSR…SQPASLRKNQ (215 aa). A compositionally biased stretch (basic and acidic residues) spans 180–202; it reads EKTDKLPMSEPSLDTKRMGEKVR. Residues Ser220 and Ser224 each carry the phosphoserine modification. Positions 252-261 are enriched in polar residues; the sequence is ELSTHTSTCP. Residues 267 to 278 are compositionally biased toward low complexity; that stretch reads PASSTASTSRSP. Ser296 is modified (phosphoserine). Residues 346 to 355 are compositionally biased toward basic and acidic residues; the sequence is TQERPERAFE. Over residues 357-368 the composition is skewed to polar residues; it reads QGSQPASLRKNQ. The Nucleophile role is filled by Cys463. His683 functions as the Proton acceptor in the catalytic mechanism.

It belongs to the MINDY deubiquitinase family. FAM188 subfamily.

The catalysed reaction is Thiol-dependent hydrolysis of ester, thioester, amide, peptide and isopeptide bonds formed by the C-terminal Gly of ubiquitin (a 76-residue protein attached to proteins as an intracellular targeting signal).. Its function is as follows. Probable hydrolase that can remove 'Lys-48'-linked conjugated ubiquitin from proteins. This chain is Probable ubiquitin carboxyl-terminal hydrolase MINDY-4 (MINDY4), found in Bos taurus (Bovine).